The chain runs to 223 residues: UPF0441 protein KPN78578_33850 (223 aa).

The segment at 165–223 (SYGAAQPGRTMNVPKTAMAPKPATTTTVTRGGFGESVAKQSTMQRSAAGSTSSSRSMGG) is disordered. Low complexity-rich tracts occupy residues 177–193 (VPKT…TTVT) and 209–223 (RSAA…SMGG).

Belongs to the UPF0441 family.

This is UPF0441 protein KPN78578_33850 from Klebsiella pneumoniae subsp. pneumoniae (strain ATCC 700721 / MGH 78578).